A 509-amino-acid polypeptide reads, in one-letter code: ATP synthase subunit alpha (509 aa).

169-176 (GDRQTGKT) is an ATP binding site.

Belongs to the ATPase alpha/beta chains family. In terms of assembly, F-type ATPases have 2 components, CF(1) - the catalytic core - and CF(0) - the membrane proton channel. CF(1) has five subunits: alpha(3), beta(3), gamma(1), delta(1), epsilon(1). CF(0) has three main subunits: a(1), b(2) and c(9-12). The alpha and beta chains form an alternating ring which encloses part of the gamma chain. CF(1) is attached to CF(0) by a central stalk formed by the gamma and epsilon chains, while a peripheral stalk is formed by the delta and b chains.

The protein resides in the cell inner membrane. It carries out the reaction ATP + H2O + 4 H(+)(in) = ADP + phosphate + 5 H(+)(out). Functionally, produces ATP from ADP in the presence of a proton gradient across the membrane. The alpha chain is a regulatory subunit. The polypeptide is ATP synthase subunit alpha (Parvibaculum lavamentivorans (strain DS-1 / DSM 13023 / NCIMB 13966)).